Reading from the N-terminus, the 156-residue chain is Transcription factor MafK (156 aa).

The tract at residues 1–21 (MTTNPKPNKALKVKEESGENA) is disordered. Positions 51-76 (RLKQRRRTLKNRGYAASCRIKRVTQK) are basic motif. The bZIP domain occupies 51–114 (RLKQRRRTLK…DALRSKYEAL (64 aa)). A leucine-zipper region spans residues 79–93 (LERQRVELQQEVEKL).

It belongs to the bZIP family. Maf subfamily. As to quaternary structure, homodimer or heterodimer.

Its subcellular location is the nucleus. Functionally, since they lack a putative transactivation domain, the small Mafs behave as transcriptional repressors when they dimerize among themselves. However, they act as transcriptional activators by dimerizing with other (usually larger) basic-zipper proteins and recruiting them to specific DNA-binding sites. Small Maf proteins heterodimerize with Fos and may act as competitive repressors of the NF-E2 transcription factor. The polypeptide is Transcription factor MafK (MAFK) (Gallus gallus (Chicken)).